The chain runs to 718 residues: Catalase (718 aa).

Catalysis depends on residues H103 and N176. A heme-binding site is contributed by Y390.

This sequence belongs to the catalase family. Requires heme as cofactor.

Its subcellular location is the peroxisome matrix. The catalysed reaction is 2 H2O2 = O2 + 2 H2O. Catalyzes the degradation of hydrogen peroxide (H(2)O(2)) generated by peroxisomal oxidases to water and oxygen, thereby protecting cells from the toxic effects of hydrogen peroxide. This chain is Catalase (CAT1), found in Blumeria hordei (Barley powdery mildew).